Reading from the N-terminus, the 616-residue chain is Secretogranin-2 (616 aa).

The signal sequence occupies residues Met-1–Ala-27. A propeptide spanning residues Ala-28–Phe-30 is cleaved from the precursor. Disordered regions lie at residues Gln-68–Leu-104 and Ala-120–Met-146. Positions Glu-92–Leu-104 are enriched in basic and acidic residues. The span at Asn-122–Lys-140 shows a compositional bias: polar residues. Tyr-150 bears the Sulfotyrosine mark. 6 positions are modified to phosphoserine: Ser-173, Ser-267, Ser-431, Ser-531, Ser-554, and Ser-555. Over residues Lys-255–Arg-283 the composition is skewed to basic and acidic residues. The segment at Lys-255–Gln-290 is disordered. Over residues Glu-548 to Lys-560 the composition is skewed to basic and acidic residues. Residues Glu-548–Gln-582 are disordered.

The protein belongs to the chromogranin/secretogranin protein family. As to quaternary structure, interacts with Secretogranin III/SCG3.

It is found in the secreted. In terms of biological role, neuroendocrine protein of the granin family that regulates the biogenesis of secretory granules. In Sus scrofa (Pig), this protein is Secretogranin-2 (SCG2).